A 74-amino-acid polypeptide reads, in one-letter code: Small ribosomal subunit protein bS18 (74 aa).

It belongs to the bacterial ribosomal protein bS18 family. Part of the 30S ribosomal subunit. Forms a tight heterodimer with protein bS6.

Its function is as follows. Binds as a heterodimer with protein bS6 to the central domain of the 16S rRNA, where it helps stabilize the platform of the 30S subunit. This Zymomonas mobilis subsp. mobilis (strain ATCC 31821 / ZM4 / CP4) protein is Small ribosomal subunit protein bS18.